The following is a 174-amino-acid chain: Ribosome maturation factor RimM (174 aa).

In terms of domain architecture, PRC barrel spans 91 to 164 (DDAWYPHQLQ…KVVLSPPGGL (74 aa)).

Belongs to the RimM family. Binds ribosomal protein uS19.

It localises to the cytoplasm. In terms of biological role, an accessory protein needed during the final step in the assembly of 30S ribosomal subunit, possibly for assembly of the head region. Essential for efficient processing of 16S rRNA. May be needed both before and after RbfA during the maturation of 16S rRNA. It has affinity for free ribosomal 30S subunits but not for 70S ribosomes. The polypeptide is Ribosome maturation factor RimM (Kineococcus radiotolerans (strain ATCC BAA-149 / DSM 14245 / SRS30216)).